Here is a 968-residue protein sequence, read N- to C-terminus: RNA polymerase-associated protein RapA (968 aa).

The region spanning 163–332 (EVGRRYAPRV…FARLRLLDPD (170 aa)) is the Helicase ATP-binding domain. 176–183 (DEVGLGKT) provides a ligand contact to ATP. Positions 278–281 (DEAH) match the DEAH box motif. The 165-residue stretch at 491–655 (RVDWLIEFLK…EFAEDLLNVL (165 aa)) folds into the Helicase C-terminal domain.

Belongs to the SNF2/RAD54 helicase family. RapA subfamily. Interacts with the RNAP. Has a higher affinity for the core RNAP than for the holoenzyme. Its ATPase activity is stimulated by binding to RNAP.

Functionally, transcription regulator that activates transcription by stimulating RNA polymerase (RNAP) recycling in case of stress conditions such as supercoiled DNA or high salt concentrations. Probably acts by releasing the RNAP, when it is trapped or immobilized on tightly supercoiled DNA. Does not activate transcription on linear DNA. Probably not involved in DNA repair. The protein is RNA polymerase-associated protein RapA of Shewanella sp. (strain ANA-3).